A 152-amino-acid chain; its full sequence is Mid1-interacting protein 1A (152 aa).

Positions 87 to 105 are enriched in basic and acidic residues; that stretch reads SEDQRRKKDTSASEPVRTE. Residues 87-109 form a disordered region; it reads SEDQRRKKDTSASEPVRTEEESD.

This sequence belongs to the SPOT14 family. In terms of tissue distribution, expressed for a short period in the cells that will produce the enveloping layer (EVL).

Its subcellular location is the nucleus. The protein resides in the cytoplasm. It is found in the cytoskeleton. In terms of biological role, involved in stabilization of microtubules. May play a role in the regulation of lipogenesis. The chain is Mid1-interacting protein 1A (mid1ip1a) from Danio rerio (Zebrafish).